The following is a 335-amino-acid chain: MTIQTSRTLSHSLGSRASSSAVAYQTECVESHRDDNGVHYGKFALGPLERGQGITVGNALRRVLLSNLEGTAVTAVRIAGVTHEFSTVPGVREDVMEILLNMKELVLRSSSPETQVGRLVAQGPGEVTAEKLQLPSDVEVINPRHHIATLAEGAILEMEFMIGRGHGYRAVDYSDSKAMAIDFLQIDSVFMPVRKVNYAVEAARVGQFLEKDRLVLEIWTNGSLTPQEALSQAARILVGLFAPLQEVSFDAPVPPKPDEDNQKNQIPIEELQLSVRAYNCLKRAQINTVADLLLYTEEDLLEIKNFGQKSAEEVVQALKARFGLTLPRTREKGKA.

Residues 1–248 (MTIQTSRTLS…GLFAPLQEVS (248 aa)) form an alpha N-terminal domain (alpha-NTD) region. Residues 256-335 (KPDEDNQKNQ…LPRTREKGKA (80 aa)) form an alpha C-terminal domain (alpha-CTD) region.

This sequence belongs to the RNA polymerase alpha chain family. In cyanobacteria the RNAP catalytic core is composed of 2 alpha, 1 beta, 1 beta', 1 gamma and 1 omega subunit. When a sigma factor is associated with the core the holoenzyme is formed, which can initiate transcription.

It catalyses the reaction RNA(n) + a ribonucleoside 5'-triphosphate = RNA(n+1) + diphosphate. Functionally, DNA-dependent RNA polymerase catalyzes the transcription of DNA into RNA using the four ribonucleoside triphosphates as substrates. The polypeptide is DNA-directed RNA polymerase subunit alpha (Synechococcus sp. (strain JA-2-3B'a(2-13)) (Cyanobacteria bacterium Yellowstone B-Prime)).